The chain runs to 971 residues: Translation initiation factor IF-2 (971 aa).

Residues 49-63 are compositionally biased toward basic and acidic residues; sequence HLRKSHGATDGDKRK. 2 disordered regions span residues 49-85 and 99-386; these read HLRKSHGATDGDKRKITLTRKHTSEIKQSDATGKART and RDDV…PTEP. A compositionally biased stretch (low complexity) spans 105-114; it reads GAEQGQAQVA. The span at 121–181 shows a compositional bias: basic and acidic residues; the sequence is ELKRREEEAR…EEEAAAKRAA (61 aa). A compositionally biased stretch (low complexity) spans 182-200; that stretch reads AEAAAAQQAAAQQAAAEQE. Residues 209-260 show a composition bias toward basic and acidic residues; sequence DEARAAAERAAQREAAKKAEDAAREAADKARAEQEEISKRRAAAEAEARAIR. Low complexity predominate over residues 303–325; that stretch reads ARPAVKKPAGAAAPATTQAPAGA. Positions 355-368 are enriched in gly residues; that stretch reads SSGGVDRGWRGGPK. The tr-type G domain occupies 471–640; that stretch reads PRPPVVTVMG…LLQAEVLELK (170 aa). The tract at residues 480 to 487 is G1; it reads GHVDHGKT. GTP is bound at residue 480 to 487; sequence GHVDHGKT. The G2 stretch occupies residues 505–509; that stretch reads GITQH. A G3 region spans residues 526-529; it reads DTPG. GTP is bound by residues 526–530 and 580–583; these read DTPGH and NKID. Residues 580–583 form a G4 region; it reads NKID. Residues 616–618 are G5; that stretch reads SAK.

Belongs to the TRAFAC class translation factor GTPase superfamily. Classic translation factor GTPase family. IF-2 subfamily.

The protein localises to the cytoplasm. Its function is as follows. One of the essential components for the initiation of protein synthesis. Protects formylmethionyl-tRNA from spontaneous hydrolysis and promotes its binding to the 30S ribosomal subunits. Also involved in the hydrolysis of GTP during the formation of the 70S ribosomal complex. The chain is Translation initiation factor IF-2 from Burkholderia cenocepacia (strain ATCC BAA-245 / DSM 16553 / LMG 16656 / NCTC 13227 / J2315 / CF5610) (Burkholderia cepacia (strain J2315)).